Here is a 479-residue protein sequence, read N- to C-terminus: Sodium-coupled neutral amino acid transporter 5 (479 aa).

Residues 1-58 (MAISCAVGMEMQEPKMNGTLSTGAAAGYRQEREGFLPTTHGPAPGRKPVQFLDFEGKT) lie on the Cytoplasmic side of the membrane. A helical transmembrane segment spans residues 59–81 (SFGMSVFNLSNAIMGSGILGLAY). Residues 82–97 (AMAHTGVIFFLALLLC) lie on the Extracellular side of the membrane. The helical transmembrane segment at 98–118 (IALLSSYSIHLLLTCASVVGI) threads the bilayer. At 119–135 (RAYEQLGQRAFGPAGKV) the chain is on the cytoplasmic side. Residues 136–156 (VVAIIICLHNVGAMSSYLFII) form a helical membrane-spanning segment. Residues 157–176 (KSELPLVIGTFLHMDPEGDW) lie on the Extracellular side of the membrane. The chain crosses the membrane as a helical span at residues 177–197 (FLKGNLLIILVSLLIILPLAL). The Cytoplasmic segment spans residues 198–202 (MKHLG). Residues 203–223 (YLGYTSSLSLTCMLFFLISVI) form a helical membrane-spanning segment. Residues 224-264 (YKKFQLGCVVSHNDTVVESEPAPLQAFNSSCEAKLFTVDSQ) lie on the Extracellular side of the membrane. An intrachain disulfide couples cysteine 231 to cysteine 254. The N-linked (GlcNAc...) asparagine glycan is linked to asparagine 236. Residues 265-285 (MSYTVPIMAFAFVCHPEVLPI) traverse the membrane as a helical segment. The Cytoplasmic segment spans residues 286–302 (YTELCCPTQRRMQAVAN). Residues 303 to 323 (MSIGAMFIMYGLTATFGYLTF) traverse the membrane as a helical segment. Topologically, residues 324 to 341 (YSTVKAEMLEMYTQEDLL) are extracellular. A helical membrane pass occupies residues 342-362 (ILCVRLAVLLAVTLTVPVVLF). Residues 363–383 (PIRRALQQLLFPSKAFSWPRH) are Cytoplasmic-facing. A helical membrane pass occupies residues 384–404 (VAIALILLILVNILVICVPTI). Over 405–406 (RD) the chain is Extracellular. A helical transmembrane segment spans residues 407–427 (IFGFIGSTSAPSLIFILPSVF). Residues 428–446 (YLRIVPADMEPLFSWPKIQ) are Cytoplasmic-facing. The helical transmembrane segment at 447 to 467 (ALCFGVLGVLFMAISLGFMFA) threads the bilayer. Residues 468–479 (NWATGQSRMSGH) are Extracellular-facing.

It belongs to the amino acid/polyamine transporter 2 family. Highly expressed in neocortex, hippocampus, striatum and spinal cord by astrocytes (at protein level). Expressed in brain, lung, stomach, kidney, spleen and testis. Expressed in the cerebral cortex between the second and third postnatal week, where expressed exclusively in glial cells from postnatal day 14 to adulthood (at protein level). Expressed in the cerebellum at post natal day 12 (P12). Expressed in liver. Expressed inside the cell body of the astrocytes.

The protein resides in the cell membrane. The catalysed reaction is L-serine(out) + Na(+)(out) + H(+)(in) = L-serine(in) + Na(+)(in) + H(+)(out). It catalyses the reaction L-alanine(out) + Na(+)(out) + H(+)(in) = L-alanine(in) + Na(+)(in) + H(+)(out). It carries out the reaction glycine(out) + Na(+)(out) + H(+)(in) = glycine(in) + Na(+)(in) + H(+)(out). The enzyme catalyses L-glutamine(out) + Na(+)(out) + H(+)(in) = L-glutamine(in) + Na(+)(in) + H(+)(out). The catalysed reaction is L-asparagine(out) + Na(+)(out) + H(+)(in) = L-asparagine(in) + Na(+)(in) + H(+)(out). It catalyses the reaction L-histidine(out) + Na(+)(out) + H(+)(in) = L-histidine(in) + Na(+)(in) + H(+)(out). It carries out the reaction L-cysteine(out) + Na(+)(out) + H(+)(in) = L-cysteine(in) + Na(+)(in) + H(+)(out). Its activity is regulated as follows. Not inhibited by lithium. Partial allosteric regulation on ions sodium binding. Its function is as follows. Symporter that cotransports neutral amino acids and sodium ions, coupled to an H(+) antiporter activity. Releases L-glutamine and glycine from astroglial cells and may participate in the glutamate/GABA-glutamine cycle and the NMDA receptors activation. In addition contributes significantly to L-glutamine uptake in retina, namely in ganglion and Mueller cells and, therefore participates in the retinal glutamate-glutamine cycle. The transport activity is pH sensitive, Li(+) tolerant, bidirectional and associated with large uncoupled fluxes of protons. The transport is electroneutral coupled to the cotransport of 1 Na(+) and the antiport of 1 H(+). May have particular importance for modulation of net hepatic glutamine flux. This chain is Sodium-coupled neutral amino acid transporter 5, found in Rattus norvegicus (Rat).